The following is a 140-amino-acid chain: Putative pre-16S rRNA nuclease (140 aa).

It belongs to the YqgF nuclease family.

The protein localises to the cytoplasm. Its function is as follows. Could be a nuclease involved in processing of the 5'-end of pre-16S rRNA. In Lachnospira eligens (strain ATCC 27750 / DSM 3376 / VPI C15-48 / C15-B4) (Eubacterium eligens), this protein is Putative pre-16S rRNA nuclease.